Reading from the N-terminus, the 85-residue chain is Phosphocarrier protein HPr (85 aa).

The 85-residue stretch at 1–85 folds into the HPr domain; it reads MYEKQVEITA…HLVALMDQLH (85 aa). Histidine 15 (pros-phosphohistidine intermediate) is an active-site residue.

Belongs to the HPr family.

The protein localises to the cytoplasm. In terms of biological role, general (non sugar-specific) component of the phosphoenolpyruvate-dependent sugar phosphotransferase system (sugar PTS). This major carbohydrate active-transport system catalyzes the phosphorylation of incoming sugar substrates concomitantly with their translocation across the cell membrane. The phosphoryl group from phosphoenolpyruvate (PEP) is transferred to the phosphoryl carrier protein HPr by enzyme I. Phospho-HPr then transfers it to the PTS EIIA domain. The protein is Phosphocarrier protein HPr (ptsH) of Vibrio cholerae serotype O1 (strain ATCC 39315 / El Tor Inaba N16961).